The chain runs to 373 residues: 8-amino-7-oxononanoate synthase (373 aa).

Arginine 16 serves as a coordination point for substrate. 93 to 94 (GF) serves as a coordination point for pyridoxal 5'-phosphate. Histidine 118 is a binding site for substrate. Pyridoxal 5'-phosphate contacts are provided by residues serine 165, 190–193 (DEAH), and 222–225 (TFSK). N6-(pyridoxal phosphate)lysine is present on lysine 225. Position 334 (threonine 334) interacts with substrate.

The protein belongs to the class-II pyridoxal-phosphate-dependent aminotransferase family. BioF subfamily. Homodimer. Pyridoxal 5'-phosphate serves as cofactor.

The enzyme catalyses 6-carboxyhexanoyl-[ACP] + L-alanine + H(+) = (8S)-8-amino-7-oxononanoate + holo-[ACP] + CO2. It participates in cofactor biosynthesis; biotin biosynthesis. In terms of biological role, catalyzes the decarboxylative condensation of pimeloyl-[acyl-carrier protein] and L-alanine to produce 8-amino-7-oxononanoate (AON), [acyl-carrier protein], and carbon dioxide. The protein is 8-amino-7-oxononanoate synthase of Helicobacter pylori (strain ATCC 700392 / 26695) (Campylobacter pylori).